Reading from the N-terminus, the 264-residue chain is MQGYLQLLDEVLHDGIDRDDRTGVGTRSLFGRQMRFDLAEGFPLLTTKKLHIRSILHELLWFLRGDTNIGYLKENKVSIWDEWADEAGDLGPVYGHQWRSWEGANGDTVDQIAWVENEIRTNPRSRRLVVSAWNVADVPKMALPPCHLLFQFYVSGGRLSCQLYQRSADLFLGVPFNIASYAMLTSMMAHVTGLKPGEFVHTLGDVHLYSNHFDQAREQLSRTPRPLPTFHIKRDVASVTDFQFDDFELTNYDPHPHIKAPVAV.

Residue R21 participates in dUMP binding. H51 serves as a coordination point for (6R)-5,10-methylene-5,6,7,8-tetrahydrofolate. 126–127 (RR) serves as a coordination point for dUMP. The active-site Nucleophile is C146. Residues 166–169 (RSAD), N177, and 207–209 (HLY) each bind dUMP. D169 is a (6R)-5,10-methylene-5,6,7,8-tetrahydrofolate binding site. A263 is a (6R)-5,10-methylene-5,6,7,8-tetrahydrofolate binding site.

The protein belongs to the thymidylate synthase family. Bacterial-type ThyA subfamily. In terms of assembly, homodimer.

Its subcellular location is the cytoplasm. It catalyses the reaction dUMP + (6R)-5,10-methylene-5,6,7,8-tetrahydrofolate = 7,8-dihydrofolate + dTMP. The protein operates within pyrimidine metabolism; dTTP biosynthesis. Catalyzes the reductive methylation of 2'-deoxyuridine-5'-monophosphate (dUMP) to 2'-deoxythymidine-5'-monophosphate (dTMP) while utilizing 5,10-methylenetetrahydrofolate (mTHF) as the methyl donor and reductant in the reaction, yielding dihydrofolate (DHF) as a by-product. This enzymatic reaction provides an intracellular de novo source of dTMP, an essential precursor for DNA biosynthesis. In Rhodopirellula baltica (strain DSM 10527 / NCIMB 13988 / SH1), this protein is Thymidylate synthase.